Here is a 473-residue protein sequence, read N- to C-terminus: Photosystem II CP43 reaction center protein (473 aa).

The propeptide occupies M1 to E14. T15 is modified (N-acetylthreonine). Residue T15 is modified to Phosphothreonine. 5 helical membrane-spanning segments follow: residues L69–A93, L134–N155, K178–T200, K255–S275, and W291–A312. E367 contributes to the [CaMn4O5] cluster binding site. The helical transmembrane segment at R447–P471 threads the bilayer.

Belongs to the PsbB/PsbC family. PsbC subfamily. PSII is composed of 1 copy each of membrane proteins PsbA, PsbB, PsbC, PsbD, PsbE, PsbF, PsbH, PsbI, PsbJ, PsbK, PsbL, PsbM, PsbT, PsbX, PsbY, PsbZ, Psb30/Ycf12, at least 3 peripheral proteins of the oxygen-evolving complex and a large number of cofactors. It forms dimeric complexes. Binds multiple chlorophylls and provides some of the ligands for the Ca-4Mn-5O cluster of the oxygen-evolving complex. It may also provide a ligand for a Cl- that is required for oxygen evolution. PSII binds additional chlorophylls, carotenoids and specific lipids. is required as a cofactor.

It is found in the plastid. It localises to the chloroplast thylakoid membrane. One of the components of the core complex of photosystem II (PSII). It binds chlorophyll and helps catalyze the primary light-induced photochemical processes of PSII. PSII is a light-driven water:plastoquinone oxidoreductase, using light energy to abstract electrons from H(2)O, generating O(2) and a proton gradient subsequently used for ATP formation. The protein is Photosystem II CP43 reaction center protein of Pelargonium hortorum (Common geranium).